Consider the following 286-residue polypeptide: Centromere protein P (286 aa).

Positions 1–73 (MDSETRELRA…RSEHSFLSKL (73 aa)) form a coiled coil. The residue at position 38 (Ser38) is a Phosphoserine.

The protein belongs to the CENP-P/CTF19 family. As to quaternary structure, component of the CENPA-CAD complex, composed of CENPI, CENPK, CENPL, CENPO, CENPP, CENPQ, CENPR and CENPS. The CENPA-CAD complex interacts with the CENPA-NAC complex, at least composed of CENPA, CENPC, CENPH, CENPM, CENPN, CENPT and CENPU.

Its subcellular location is the nucleus. It is found in the chromosome. It localises to the centromere. Component of the CENPA-CAD (nucleosome distal) complex, a complex recruited to centromeres which is involved in assembly of kinetochore proteins, mitotic progression and chromosome segregation. May be involved in incorporation of newly synthesized CENPA into centromeres via its interaction with the CENPA-NAC complex. The sequence is that of Centromere protein P (Cenpp) from Mus musculus (Mouse).